Here is a 211-residue protein sequence, read N- to C-terminus: Molybdenum cofactor guanylyltransferase (211 aa).

GTP-binding positions include 12 to 14 (LAG), lysine 25, asparagine 53, aspartate 71, and aspartate 101. Aspartate 101 serves as a coordination point for Mg(2+).

It belongs to the MobA family. In terms of assembly, monomer. Mg(2+) is required as a cofactor.

Its subcellular location is the cytoplasm. The enzyme catalyses Mo-molybdopterin + GTP + H(+) = Mo-molybdopterin guanine dinucleotide + diphosphate. Transfers a GMP moiety from GTP to Mo-molybdopterin (Mo-MPT) cofactor (Moco or molybdenum cofactor) to form Mo-molybdopterin guanine dinucleotide (Mo-MGD) cofactor. The protein is Molybdenum cofactor guanylyltransferase of Acidovorax ebreus (strain TPSY) (Diaphorobacter sp. (strain TPSY)).